Consider the following 294-residue polypeptide: 33 kDa chaperonin (294 aa).

Intrachain disulfides connect Cys239-Cys241 and Cys272-Cys275.

It belongs to the HSP33 family. Under oxidizing conditions two disulfide bonds are formed involving the reactive cysteines. Under reducing conditions zinc is bound to the reactive cysteines and the protein is inactive.

The protein localises to the cytoplasm. Functionally, redox regulated molecular chaperone. Protects both thermally unfolding and oxidatively damaged proteins from irreversible aggregation. Plays an important role in the bacterial defense system toward oxidative stress. In Listeria monocytogenes serotype 4b (strain CLIP80459), this protein is 33 kDa chaperonin.